The sequence spans 815 residues: (-)-kolavenyl diphosphate synthase TPS14, chloroplastic (815 aa).

A chloroplast-targeting transit peptide spans 1–51 (MFMSSSSSSHARRPQLSSFSYLHPPLPFPGLSFFNTRDKRVNFDSTRIICI). Residue Lys247 participates in substrate binding. Mg(2+) contacts are provided by Asp379 and Asp381. Positions 379-382 (DIDD) match the DXDD motif motif. Position 465 (Lys465) interacts with substrate.

Belongs to the terpene synthase family. Tpsc subfamily. Mg(2+) serves as cofactor.

The protein localises to the plastid. It localises to the chloroplast. The enzyme catalyses (2E,6E,10E)-geranylgeranyl diphosphate = (-)-kolavenyl diphosphate. Its activity is regulated as follows. Inhibited by high concentrations of magnesium. Diterpene synthase that catalyzes the formation of (-)-kolavenyl diphosphate from geranylgeranyl diphosphate (GGPP). This Tripterygium wilfordii (Thunder God vine) protein is (-)-kolavenyl diphosphate synthase TPS14, chloroplastic.